Consider the following 198-residue polypeptide: Cytokinin riboside 5'-monophosphate phosphoribohydrolase (198 aa).

Residues E91, 109-110 (RK), 126-132 (GVGTAEE), and T138 contribute to the substrate site.

Belongs to the LOG family.

It catalyses the reaction N(6)-(dimethylallyl)adenosine 5'-phosphate + H2O = N(6)-dimethylallyladenine + D-ribose 5-phosphate. The enzyme catalyses 9-ribosyl-trans-zeatin 5'-phosphate + H2O = trans-zeatin + D-ribose 5-phosphate. Catalyzes the hydrolytic removal of ribose 5'-monophosphate from nitrogen N6-modified adenosines, the final step of bioactive cytokinin synthesis. The chain is Cytokinin riboside 5'-monophosphate phosphoribohydrolase (fas6) from Rhodococcoides fascians (Rhodococcus fascians).